Reading from the N-terminus, the 408-residue chain is Putative agmatinase 3 (408 aa).

Positions 1–21 are cleaved as a signal peptide; it reads MKSVEWFTWGVFLLLSGFGEA. 6 residues coordinate Mn(2+): His-198, Asp-222, His-224, Asp-226, Asp-319, and Asp-321.

It belongs to the arginase family. Mn(2+) serves as cofactor.

It carries out the reaction agmatine + H2O = urea + putrescine. The sequence is that of Putative agmatinase 3 from Schizosaccharomyces pombe (strain 972 / ATCC 24843) (Fission yeast).